Here is a 100-residue protein sequence, read N- to C-terminus: Large ribosomal subunit protein uL23 (100 aa).

It belongs to the universal ribosomal protein uL23 family. Part of the 50S ribosomal subunit. Contacts protein L29, and trigger factor when it is bound to the ribosome.

Its function is as follows. One of the early assembly proteins it binds 23S rRNA. One of the proteins that surrounds the polypeptide exit tunnel on the outside of the ribosome. Forms the main docking site for trigger factor binding to the ribosome. In Edwardsiella ictaluri (strain 93-146), this protein is Large ribosomal subunit protein uL23.